The following is a 943-amino-acid chain: Translation initiation factor IF-2 (943 aa).

Residues 35 to 359 (MSSIDQDQEA…MPQRKERPLP (325 aa)) are disordered. Positions 57–76 (KAPSSQAAKTPAKAAKTSSA) are enriched in low complexity. Composition is skewed to basic and acidic residues over residues 92 to 103 (SNDHADAAEHSQ) and 110 to 124 (AKQE…KTSD). The span at 130 to 141 (SKSTILRPRSTQ) shows a compositional bias: polar residues. Over residues 142 to 190 (TAHTNTNHNRGGNTASANNTANGRNSNRSNNNNNNRSANNANRSGNNNR) the composition is skewed to low complexity. 3 stretches are compositionally biased toward basic and acidic residues: residues 191-205 (SNER…RFDN), 239-250 (ASERQQPKRQEA), and 259-271 (KRSE…RPRT). 2 stretches are compositionally biased toward low complexity: residues 289–299 (PAAAAPKPASA) and 315–330 (NFGR…GFNR). The span at 331–342 (NNRRNKKNKRRQ) shows a compositional bias: basic residues. Residues 346 to 358 (PKKEMPQRKERPL) show a composition bias toward basic and acidic residues. A tr-type G domain is found at 444–613 (PRPPVVTIMG…LLEADVLELK (170 aa)). The tract at residues 453–460 (GHVDHGKT) is G1. Residue 453–460 (GHVDHGKT) participates in GTP binding. Residues 478-482 (GITQH) form a G2 region. The G3 stretch occupies residues 499-502 (DTPG). GTP-binding positions include 499–503 (DTPGH) and 553–556 (NKID). A G4 region spans residues 553–556 (NKID). The tract at residues 589-591 (SAK) is G5.

It belongs to the TRAFAC class translation factor GTPase superfamily. Classic translation factor GTPase family. IF-2 subfamily.

It localises to the cytoplasm. Functionally, one of the essential components for the initiation of protein synthesis. Protects formylmethionyl-tRNA from spontaneous hydrolysis and promotes its binding to the 30S ribosomal subunits. Also involved in the hydrolysis of GTP during the formation of the 70S ribosomal complex. This is Translation initiation factor IF-2 from Lacticaseibacillus paracasei (strain ATCC 334 / BCRC 17002 / CCUG 31169 / CIP 107868 / KCTC 3260 / NRRL B-441) (Lactobacillus paracasei).